Here is a 368-residue protein sequence, read N- to C-terminus: C-X-C chemokine receptor type 3 (368 aa).

Over 1-53 (MVLEVSDHQVLNDAEVAALLENFSSSYDYGENESDSCCTSPPCPQDFSLNFDR) the chain is Extracellular. Asn22 carries N-linked (GlcNAc...) asparagine glycosylation. 2 positions are modified to sulfotyrosine: Tyr27 and Tyr29. The N-linked (GlcNAc...) asparagine glycan is linked to Asn32. The chain crosses the membrane as a helical span at residues 54 to 80 (AFLPALYSLLFLLGLLGNGAVAAVLLS). Residues 81–89 (RRTALSSTD) lie on the Cytoplasmic side of the membrane. The helical transmembrane segment at 90 to 110 (TFLLHLAVADTLLVLTLPLWA) threads the bilayer. The Extracellular segment spans residues 111-125 (VDAAVQWVFGSGLCK). The cysteines at positions 124 and 203 are disulfide-linked. A helical transmembrane segment spans residues 126–147 (VAGALFNINFYAGALLLACISF). At 148 to 169 (DRYLNIVHATQLYRRGPPARVT) the chain is on the cytoplasmic side. A helical membrane pass occupies residues 170 to 189 (LTCLAVWGLCLLFALPDFIF). Residues 190–212 (LSAHHDERLNATHCQYNFPQVGR) lie on the Extracellular side of the membrane. The chain crosses the membrane as a helical span at residues 213–233 (TALRVLQLVAGFLLPLLVMAY). Residues 234 to 255 (CYAHILAVLLVSRGQRRLRAMR) are Cytoplasmic-facing. A helical transmembrane segment spans residues 256 to 277 (LVVVVVVAFALCWTPYHLVVLV). Topologically, residues 278 to 298 (DILMDLGALARNCGRESRVDV) are extracellular. The chain crosses the membrane as a helical span at residues 299–321 (AKSVTSGLGYMHCCLNPLLYAFV). At 322 to 368 (GVKFRERMWMLLLRLGCPNQRGLQRQPSSSRRDSSWSETSEASYSGL) the chain is on the cytoplasmic side. The segment at 342-368 (RGLQRQPSSSRRDSSWSETSEASYSGL) is disordered. A compositionally biased stretch (low complexity) spans 357–368 (WSETSEASYSGL).

It belongs to the G-protein coupled receptor 1 family. Homomer. Forms heteromers with ACKR4. In terms of assembly, interacts with PF4/CXCL4. In terms of processing, sulfation on Tyr-27 and Tyr-29 is essential for CXCL10 binding and subsequent signal transduction induction. N-glycosylated. Isoform 1 and isoform 2 are mainly expressed in heart, kidney, liver and skeletal muscle. Isoform 1 is also expressed in placenta. Isoform 2 is expressed in endothelial cells. Expressed in T-cells (at protein level).

It is found in the cell membrane. Its function is as follows. Receptor for the C-X-C chemokine CXCL9, CXCL10 and CXCL11 and mediates the proliferation, survival and angiogenic activity of human mesangial cells (HMC) through a heterotrimeric G-protein signaling pathway. Binds to CCL21. Probably promotes cell chemotaxis response. Upon activation by PF4, induces activated T-lymphocytes migration mediated via downstream Ras/extracellular signal-regulated kinase (ERK) signaling. Functionally, receptor for the C-X-C chemokine CXCL4 and also mediates the inhibitory activities of CXCL9, CXCL10 and CXCL11 on the proliferation, survival and angiogenic activity of human microvascular endothelial cells (HMVEC) through a cAMP-mediated signaling pathway. Does not promote cell chemotaxis respons. Interaction with CXCL4 or CXCL10 leads to activation of the p38MAPK pathway and contributes to inhibition of angiogenesis. Overexpression in renal cancer cells down-regulates expression of the anti-apoptotic protein HMOX1 and promotes apoptosis. Mediates the activity of CXCL11. This Homo sapiens (Human) protein is C-X-C chemokine receptor type 3 (CXCR3).